Consider the following 525-residue polypeptide: GMP synthase [glutamine-hydrolyzing] (525 aa).

The Glutamine amidotransferase type-1 domain maps to Arg9–Leu207. Cys86 serves as the catalytic Nucleophile. Residues His181 and Glu183 contribute to the active site. Residues Trp208–Arg400 enclose the GMPS ATP-PPase domain. Position 235 to 241 (Ser235 to Ser241) interacts with ATP.

In terms of assembly, homodimer.

It catalyses the reaction XMP + L-glutamine + ATP + H2O = GMP + L-glutamate + AMP + diphosphate + 2 H(+). The protein operates within purine metabolism; GMP biosynthesis; GMP from XMP (L-Gln route): step 1/1. Its function is as follows. Catalyzes the synthesis of GMP from XMP. The sequence is that of GMP synthase [glutamine-hydrolyzing] from Escherichia coli O8 (strain IAI1).